The sequence spans 99 residues: NADH-quinone oxidoreductase subunit K (99 aa).

The next 3 membrane-spanning stretches (helical) occupy residues 3–23 (LVNY…TVLV), 28–48 (IIMF…FVAF), and 59–79 (VVAF…LAII).

The protein belongs to the complex I subunit 4L family. NDH-1 is composed of 14 different subunits. Subunits NuoA, H, J, K, L, M, N constitute the membrane sector of the complex.

The protein localises to the cell membrane. It catalyses the reaction a quinone + NADH + 5 H(+)(in) = a quinol + NAD(+) + 4 H(+)(out). Its function is as follows. NDH-1 shuttles electrons from NADH, via FMN and iron-sulfur (Fe-S) centers, to quinones in the respiratory chain. The immediate electron acceptor for the enzyme in this species is believed to be a menaquinone. Couples the redox reaction to proton translocation (for every two electrons transferred, four hydrogen ions are translocated across the cytoplasmic membrane), and thus conserves the redox energy in a proton gradient. This Beutenbergia cavernae (strain ATCC BAA-8 / DSM 12333 / CCUG 43141 / JCM 11478 / NBRC 16432 / NCIMB 13614 / HKI 0122) protein is NADH-quinone oxidoreductase subunit K.